Here is a 230-residue protein sequence, read N- to C-terminus: Ureidoacrylate amidohydrolase RutB (230 aa).

The Proton acceptor role is filled by Asp24. Lys133 is an active-site residue. The Nucleophile role is filled by Cys166.

Belongs to the isochorismatase family. RutB subfamily.

The catalysed reaction is (Z)-3-ureidoacrylate + H2O + H(+) = (Z)-3-aminoacrylate + NH4(+) + CO2. It carries out the reaction (Z)-3-ureidoacrylate + H2O = (Z)-3-aminoacrylate + carbamate + H(+). It catalyses the reaction (Z)-2-methylureidoacrylate + H2O + H(+) = (Z)-2-methylaminoacrylate + NH4(+) + CO2. In terms of biological role, hydrolyzes ureidoacrylate to form aminoacrylate and carbamate. The carbamate hydrolyzes spontaneously, thereby releasing one of the nitrogen atoms of the pyrimidine ring as ammonia and one of its carbon atoms as CO2. The chain is Ureidoacrylate amidohydrolase RutB from Escherichia coli O7:K1 (strain IAI39 / ExPEC).